The chain runs to 289 residues: NFU1 iron-sulfur cluster scaffold homolog, mitochondrial (289 aa).

Residues Met1–Thr56 constitute a mitochondrion transit peptide. The nifU stretch occupies residues Ile183 to Val251. Cys220 and Cys223 together coordinate [4Fe-4S] cluster. Positions Glu267–Asn289 are disordered.

Belongs to the NifU family.

The protein resides in the mitochondrion. Molecular scaffold for [Fe-S] cluster assembly of mitochondrial iron-sulfur proteins. The chain is NFU1 iron-sulfur cluster scaffold homolog, mitochondrial from Drosophila willistoni (Fruit fly).